Reading from the N-terminus, the 190-residue chain is Crossover junction endodeoxyribonuclease RuvC (190 aa).

Catalysis depends on residues D7, E68, and D141. Residues D7, E68, and D141 each coordinate Mg(2+).

Belongs to the RuvC family. In terms of assembly, homodimer which binds Holliday junction (HJ) DNA. The HJ becomes 2-fold symmetrical on binding to RuvC with unstacked arms; it has a different conformation from HJ DNA in complex with RuvA. In the full resolvosome a probable DNA-RuvA(4)-RuvB(12)-RuvC(2) complex forms which resolves the HJ. It depends on Mg(2+) as a cofactor.

The protein resides in the cytoplasm. It carries out the reaction Endonucleolytic cleavage at a junction such as a reciprocal single-stranded crossover between two homologous DNA duplexes (Holliday junction).. Functionally, the RuvA-RuvB-RuvC complex processes Holliday junction (HJ) DNA during genetic recombination and DNA repair. Endonuclease that resolves HJ intermediates. Cleaves cruciform DNA by making single-stranded nicks across the HJ at symmetrical positions within the homologous arms, yielding a 5'-phosphate and a 3'-hydroxyl group; requires a central core of homology in the junction. The consensus cleavage sequence is 5'-(A/T)TT(C/G)-3'. Cleavage occurs on the 3'-side of the TT dinucleotide at the point of strand exchange. HJ branch migration catalyzed by RuvA-RuvB allows RuvC to scan DNA until it finds its consensus sequence, where it cleaves and resolves the cruciform DNA. The protein is Crossover junction endodeoxyribonuclease RuvC of Endomicrobium trichonymphae.